A 307-amino-acid polypeptide reads, in one-letter code: Transmembrane and coiled-coil domain-containing protein 5B (307 aa).

The stretch at 17–207 (FASSLEAVKQ…LEKQISKAQD (191 aa)) forms a coiled coil. A helical transmembrane segment spans residues 243-265 (YFQYLTFMVLVFIRLLAYVIFHL).

It belongs to the TMCO5 family.

The protein resides in the membrane. The polypeptide is Transmembrane and coiled-coil domain-containing protein 5B (TMCO5B) (Homo sapiens (Human)).